Here is a 100-residue protein sequence, read N- to C-terminus: Urease subunit gamma (100 aa).

Belongs to the urease gamma subunit family. Heterotrimer of UreA (gamma), UreB (beta) and UreC (alpha) subunits. Three heterotrimers associate to form the active enzyme.

The protein localises to the cytoplasm. The enzyme catalyses urea + 2 H2O + H(+) = hydrogencarbonate + 2 NH4(+). It functions in the pathway nitrogen metabolism; urea degradation; CO(2) and NH(3) from urea (urease route): step 1/1. The sequence is that of Urease subunit gamma from Herpetosiphon aurantiacus (strain ATCC 23779 / DSM 785 / 114-95).